Here is a 104-residue protein sequence, read N- to C-terminus: Large ribosomal subunit protein bL21 (104 aa).

The protein belongs to the bacterial ribosomal protein bL21 family. As to quaternary structure, part of the 50S ribosomal subunit. Contacts protein L20.

Its function is as follows. This protein binds to 23S rRNA in the presence of protein L20. This Francisella tularensis subsp. tularensis (strain FSC 198) protein is Large ribosomal subunit protein bL21.